Reading from the N-terminus, the 45-residue chain is NLR family pyrin domain-containing protein 2B (45 aa).

Expressed in all tissues tested, including spleen, lymph node, thymus, tonsil, peripheral blood leukocyte, bone marrow, liver, heart, brain, placenta, lung, skeletal muscle, kidney and pancreas.

It localises to the cytoplasm. It is found in the nucleus. Functionally, may function as a negative regulator of NF-kappa-B by preventing RELA/p65 phosphorylation at 'Ser-536', thereby inhibiting its transcriptional activity. Through NF-kappa-B regulation may control cytokine release upon Toll-like receptors activation and therefore play a role in modulation of innate immunity. May also play a role in cell cycle progression and apoptotic process. The protein is NLR family pyrin domain-containing protein 2B of Homo sapiens (Human).